The primary structure comprises 484 residues: MVTTTEKTNIGYIRQVIGPVVDVEFPAGKLPQIYNALVIKGKNEAGQDLSVTCEVQQLLGDRKVRAVSMSTTDGLVRGLEVIDTGAPISVPVGEATLGRIFNVLGEPVDELGPVNAATTSPIHRDAPKLTDLETKPKVFETGIKVIDLLAPYRQGGKIGLFGGAGVGKTVLIQELINNIAKEHGGVSVFGGVGERTREGNDLYQEFKESGVIDEKNIANSKVALVYGQMNEPPGARMRVGLSALTMAEHFRDVNKQDVLLFIDNIFRFVQAGSEVSALLGRMPSAVGYQPTLGTDVGQLQERITSTLEGSITSIQAVYVPADDLTDPAPATTFAHLDATTVLSRGLASKGIYPAVDPLDSTSTMLQPSIVGEEHYRTARAVQSTLQRYKELQDIIAILGLDELSEEDRQTVARARKIEKFLSQPFFVAEVFTGSPGKYVKLEDTISGFNRILNGELDDLPEQAFYLVGDIQEAIEKGAKLKAES.

An ATP-binding site is contributed by 162–169 (GGAGVGKT).

The protein belongs to the ATPase alpha/beta chains family. In terms of assembly, F-type ATPases have 2 components, CF(1) - the catalytic core - and CF(0) - the membrane proton channel. CF(1) has five subunits: alpha(3), beta(3), gamma(1), delta(1), epsilon(1). CF(0) has four main subunits: a(1), b(1), b'(1) and c(9-12).

It localises to the cellular thylakoid membrane. It carries out the reaction ATP + H2O + 4 H(+)(in) = ADP + phosphate + 5 H(+)(out). In terms of biological role, produces ATP from ADP in the presence of a proton gradient across the membrane. The catalytic sites are hosted primarily by the beta subunits. This is ATP synthase subunit beta from Synechococcus elongatus (strain ATCC 33912 / PCC 7942 / FACHB-805) (Anacystis nidulans R2).